Consider the following 256-residue polypeptide: Cysteine-rich repeat secretory protein 29 (256 aa).

The N-terminal stretch at 1-26 (MSSVFGSVHILAMIAIQLLLIHSVSS) is a signal peptide. Gnk2-homologous domains follow at residues 33 to 136 (YLHH…SVAS) and 142 to 253 (YEND…LYPF).

The protein belongs to the cysteine-rich repeat secretory protein family.

The protein localises to the secreted. The chain is Cysteine-rich repeat secretory protein 29 (CRRSP29) from Arabidopsis thaliana (Mouse-ear cress).